Here is a 612-residue protein sequence, read N- to C-terminus: Arginine--tRNA ligase (612 aa).

Positions 152-162 (PNIAKEMHVGH) match the 'HIGH' region motif.

It belongs to the class-I aminoacyl-tRNA synthetase family. As to quaternary structure, monomer.

The protein localises to the cytoplasm. The catalysed reaction is tRNA(Arg) + L-arginine + ATP = L-arginyl-tRNA(Arg) + AMP + diphosphate. The sequence is that of Arginine--tRNA ligase from Prochlorococcus marinus (strain MIT 9313).